A 197-amino-acid chain; its full sequence is HTH-type transcriptional regulator BetI (197 aa).

The HTH tetR-type domain maps to 8 to 68 (PIRRQQLIEA…ATMRYLMNAL (61 aa)). A DNA-binding region (H-T-H motif) is located at residues 31 to 50 (SIALIARLAGVSNGIISHYF).

Its pathway is amine and polyamine biosynthesis; betaine biosynthesis via choline pathway [regulation]. In terms of biological role, repressor involved in the biosynthesis of the osmoprotectant glycine betaine. It represses transcription of the choline transporter BetT and the genes of BetAB involved in the synthesis of glycine betaine. The sequence is that of HTH-type transcriptional regulator BetI from Pseudomonas fluorescens (strain SBW25).